The chain runs to 484 residues: Acetyl-coenzyme A carboxylase carboxyl transferase subunit beta, chloroplastic (484 aa).

Residues 223–484 enclose the CoA carboxyltransferase N-terminal domain; sequence LWIQCDNCYG…LHAFFPLNKN (262 aa). 4 residues coordinate Zn(2+): C227, C230, C243, and C246. The segment at 227–246 adopts a C4-type zinc-finger fold; sequence CDNCYGLMYKKVKMNVCEQC.

The protein belongs to the AccD/PCCB family. As to quaternary structure, acetyl-CoA carboxylase is a heterohexamer composed of biotin carboxyl carrier protein, biotin carboxylase and 2 subunits each of ACCase subunit alpha and ACCase plastid-coded subunit beta (accD). Zn(2+) serves as cofactor.

It localises to the plastid. It is found in the chloroplast stroma. The enzyme catalyses N(6)-carboxybiotinyl-L-lysyl-[protein] + acetyl-CoA = N(6)-biotinyl-L-lysyl-[protein] + malonyl-CoA. It participates in lipid metabolism; malonyl-CoA biosynthesis; malonyl-CoA from acetyl-CoA: step 1/1. Functionally, component of the acetyl coenzyme A carboxylase (ACC) complex. Biotin carboxylase (BC) catalyzes the carboxylation of biotin on its carrier protein (BCCP) and then the CO(2) group is transferred by the transcarboxylase to acetyl-CoA to form malonyl-CoA. This is Acetyl-coenzyme A carboxylase carboxyl transferase subunit beta, chloroplastic from Olimarabidopsis pumila (Dwarf rocket).